The primary structure comprises 243 residues: UPF0173 metal-dependent hydrolase Xaut_3786 (243 aa).

This sequence belongs to the UPF0173 family.

The chain is UPF0173 metal-dependent hydrolase Xaut_3786 from Xanthobacter autotrophicus (strain ATCC BAA-1158 / Py2).